A 271-amino-acid chain; its full sequence is 4-diphosphocytidyl-2-C-methyl-D-erythritol kinase (271 aa).

Residue Lys8 is part of the active site. 90–100 is a binding site for ATP; the sequence is PFGAGLGGGSA. Asp132 is a catalytic residue.

It belongs to the GHMP kinase family. IspE subfamily.

It carries out the reaction 4-CDP-2-C-methyl-D-erythritol + ATP = 4-CDP-2-C-methyl-D-erythritol 2-phosphate + ADP + H(+). The protein operates within isoprenoid biosynthesis; isopentenyl diphosphate biosynthesis via DXP pathway; isopentenyl diphosphate from 1-deoxy-D-xylulose 5-phosphate: step 3/6. Functionally, catalyzes the phosphorylation of the position 2 hydroxy group of 4-diphosphocytidyl-2C-methyl-D-erythritol. This Parabacteroides distasonis (strain ATCC 8503 / DSM 20701 / CIP 104284 / JCM 5825 / NCTC 11152) protein is 4-diphosphocytidyl-2-C-methyl-D-erythritol kinase.